The primary structure comprises 287 residues: Acetylglutamate kinase (287 aa).

Residues 70–71 (GG), Arg-92, and Asn-184 contribute to the substrate site.

This sequence belongs to the acetylglutamate kinase family. ArgB subfamily.

The protein localises to the cytoplasm. The catalysed reaction is N-acetyl-L-glutamate + ATP = N-acetyl-L-glutamyl 5-phosphate + ADP. It participates in amino-acid biosynthesis; L-arginine biosynthesis; N(2)-acetyl-L-ornithine from L-glutamate: step 2/4. Functionally, catalyzes the ATP-dependent phosphorylation of N-acetyl-L-glutamate. The polypeptide is Acetylglutamate kinase (Ruegeria pomeroyi (strain ATCC 700808 / DSM 15171 / DSS-3) (Silicibacter pomeroyi)).